The chain runs to 486 residues: Zinc finger chaperone ZPR1 (486 aa).

A disordered region spans residues 1 to 31 (MSEQKEDLFKPVGEAAAEVEDESIAEQNKAN). Residue Ser23 is modified to Phosphoserine. 2 C4-type zinc fingers span residues 54–86 (CMNC…CPHC) and 295–327 (CPSC…CDHC). Position 407 is a phosphothreonine (Thr407).

The protein belongs to the ZPR1 family. In terms of assembly, interacts with elongation factor 1-alpha.

The protein localises to the cytoplasm. It is found in the nucleus. Functionally, acts as a protein folding chaperone for elongation factor 1-alpha. The protein is Zinc finger chaperone ZPR1 of Saccharomyces cerevisiae (strain ATCC 204508 / S288c) (Baker's yeast).